Here is a 131-residue protein sequence, read N- to C-terminus: Ribosome-binding factor A (131 aa).

The segment at 110-131 (QMNLGEDNEDNEDKENNDPGEE) is disordered. Residues 115 to 131 (EDNEDNEDKENNDPGEE) are compositionally biased toward acidic residues.

The protein belongs to the RbfA family. In terms of assembly, monomer. Binds 30S ribosomal subunits, but not 50S ribosomal subunits or 70S ribosomes.

The protein resides in the cytoplasm. Its function is as follows. One of several proteins that assist in the late maturation steps of the functional core of the 30S ribosomal subunit. Associates with free 30S ribosomal subunits (but not with 30S subunits that are part of 70S ribosomes or polysomes). Required for efficient processing of 16S rRNA. May interact with the 5'-terminal helix region of 16S rRNA. This chain is Ribosome-binding factor A, found in Natranaerobius thermophilus (strain ATCC BAA-1301 / DSM 18059 / JW/NM-WN-LF).